A 123-amino-acid chain; its full sequence is Small ribosomal subunit protein uS12 (123 aa).

Aspartate 89 carries the post-translational modification 3-methylthioaspartic acid.

Belongs to the universal ribosomal protein uS12 family. As to quaternary structure, part of the 30S ribosomal subunit. Contacts proteins S8 and S17. May interact with IF1 in the 30S initiation complex.

With S4 and S5 plays an important role in translational accuracy. Functionally, interacts with and stabilizes bases of the 16S rRNA that are involved in tRNA selection in the A site and with the mRNA backbone. Located at the interface of the 30S and 50S subunits, it traverses the body of the 30S subunit contacting proteins on the other side and probably holding the rRNA structure together. The combined cluster of proteins S8, S12 and S17 appears to hold together the shoulder and platform of the 30S subunit. In Methylobacterium sp. (strain 4-46), this protein is Small ribosomal subunit protein uS12.